The primary structure comprises 381 residues: Alkanesulfonate monooxygenase (381 aa).

This sequence belongs to the SsuD family. In terms of assembly, homotetramer.

The catalysed reaction is an alkanesulfonate + FMNH2 + O2 = an aldehyde + FMN + sulfite + H2O + 2 H(+). Its function is as follows. Catalyzes the desulfonation of aliphatic sulfonates. This is Alkanesulfonate monooxygenase from Cronobacter sakazakii (strain ATCC BAA-894) (Enterobacter sakazakii).